The chain runs to 211 residues: Large ribosomal subunit protein uL3 (211 aa).

Residue Gln150 is modified to N5-methylglutamine.

It belongs to the universal ribosomal protein uL3 family. Part of the 50S ribosomal subunit. Forms a cluster with proteins L14 and L19. Methylated by PrmB.

Functionally, one of the primary rRNA binding proteins, it binds directly near the 3'-end of the 23S rRNA, where it nucleates assembly of the 50S subunit. The sequence is that of Large ribosomal subunit protein uL3 from Pseudomonas fluorescens (strain Pf0-1).